A 375-amino-acid chain; its full sequence is Mitochondrial phosphate carrier protein 3, mitochondrial (375 aa).

The helical transmembrane segment at 76 to 96 (AFYAACTFGGILSCGLTHMTV) threads the bilayer. Solcar repeat units follow at residues 76-160 (AFYA…FKKT), 173-257 (YKTL…IVEM), and 274-353 (LQLG…FKVF). At 97-134 (TPLDLVKCNMQIDPAKYKSISSGFGILLKEQGVKGFFR) the chain is on the mitochondrial matrix side. Residues 135–154 (GWVPTLLGYSAQGACKFGFY) traverse the membrane as a helical segment. Topologically, residues 155–175 (EYFKKTYSDLAGPEYTAKYKT) are mitochondrial intermembrane. The helical transmembrane segment at 176-196 (LIYLAGSASAEIIADIALCPF) threads the bilayer. Topologically, residues 197–231 (EAVKVRVQTQPGFARGMSDGFPKFIKSEGYGGLYK) are mitochondrial matrix. The helical transmembrane segment at 232-251 (GLAPLWGRQIPYTMMKFASF) threads the bilayer. Topologically, residues 252 to 272 (ETIVEMIYKYAIPNPKSECSK) are mitochondrial intermembrane. Residues 273-293 (GLQLGVSFAGGYVAGVFCAIV) traverse the membrane as a helical segment. The Mitochondrial matrix portion of the chain corresponds to 294-332 (SHPADNLVSFLNNAKGATVGDAVKKIGMVGLFTRGLPLR). Residues 333–353 (IVMIGTLTGAQWGLYDAFKVF) form a helical membrane-spanning segment. Topologically, residues 354–375 (VGLPTTGGVAPAPAIAATEAKA) are mitochondrial intermembrane.

The protein belongs to the mitochondrial carrier (TC 2.A.29) family. In terms of tissue distribution, expressed in stems, leaves and flowers. Strong expression in vascular tissues.

The protein resides in the mitochondrion inner membrane. In terms of biological role, transport of phosphate groups from the cytosol to the mitochondrial matrix. Mediates salt stress tolerance through an ATP-dependent pathway and via modulation of the gibberellin metabolism. The protein is Mitochondrial phosphate carrier protein 3, mitochondrial (MPT3) of Arabidopsis thaliana (Mouse-ear cress).